Reading from the N-terminus, the 276-residue chain is Elongation factor Ts (276 aa).

Residues 81–84 are involved in Mg(2+) ion dislocation from EF-Tu; the sequence is TDFV.

It belongs to the EF-Ts family.

Its subcellular location is the cytoplasm. Its function is as follows. Associates with the EF-Tu.GDP complex and induces the exchange of GDP to GTP. It remains bound to the aminoacyl-tRNA.EF-Tu.GTP complex up to the GTP hydrolysis stage on the ribosome. This chain is Elongation factor Ts, found in Leifsonia xyli subsp. xyli (strain CTCB07).